The chain runs to 100 residues: UPF0213 protein YhbQ (100 aa).

In terms of domain architecture, GIY-YIG spans 2-77 (TPWFLYLIRT…KQLTKRQKER (76 aa)).

This sequence belongs to the UPF0213 family.

The sequence is that of UPF0213 protein YhbQ from Escherichia coli O1:K1 / APEC.